The chain runs to 315 residues: Glutaminase (315 aa).

Substrate contacts are provided by serine 70, asparagine 120, glutamate 166, asparagine 173, tyrosine 197, tyrosine 249, and valine 267.

The protein belongs to the glutaminase family. Homotetramer.

It catalyses the reaction L-glutamine + H2O = L-glutamate + NH4(+). The sequence is that of Glutaminase from Mesorhizobium japonicum (strain LMG 29417 / CECT 9101 / MAFF 303099) (Mesorhizobium loti (strain MAFF 303099)).